We begin with the raw amino-acid sequence, 196 residues long: GTP cyclohydrolase 1 (196 aa).

Zn(2+)-binding residues include Cys85, His88, and Cys158.

It belongs to the GTP cyclohydrolase I family. In terms of assembly, homomer.

It catalyses the reaction GTP + H2O = 7,8-dihydroneopterin 3'-triphosphate + formate + H(+). Its pathway is cofactor biosynthesis; 7,8-dihydroneopterin triphosphate biosynthesis; 7,8-dihydroneopterin triphosphate from GTP: step 1/1. The polypeptide is GTP cyclohydrolase 1 (Corynebacterium aurimucosum (strain ATCC 700975 / DSM 44827 / CIP 107346 / CN-1) (Corynebacterium nigricans)).